Reading from the N-terminus, the 237-residue chain is Chalcone--flavanone isomerase (237 aa).

Substrate contacts are provided by Thr50 and Ser192.

This sequence belongs to the chalcone isomerase family.

It carries out the reaction a chalcone = a flavanone.. Its pathway is secondary metabolite biosynthesis; flavonoid biosynthesis. In terms of biological role, catalyzes the intramolecular cyclization of bicyclic chalcones into tricyclic (S)-flavanones. Responsible for the isomerization of 4,2',4',6'-tetrahydroxychalcone (also termed chalcone) into naringenin. In Callistephus chinensis (China aster), this protein is Chalcone--flavanone isomerase (CHI).